Consider the following 931-residue polypeptide: GPI ethanolamine phosphate transferase 1 (931 aa).

Position 1 (Met1) is a topological domain, cytoplasmic. A helical transmembrane segment spans residues 2 to 24; sequence LLFFTLGLLIHFVFFASIFDIYF. Residues 25–442 are Lumenal-facing; it reads TSPLVHGMTP…SYYHTYDRFF (418 aa). Asn128, Asn192, and Asn350 each carry an N-linked (GlcNAc...) asparagine glycan. Residues 443-463 form a helical membrane-spanning segment; sequence LGVNVVIGFVGWISYASLLII. Topologically, residues 464–482 are cytoplasmic; it reads KSHSNLIKGVSKEVKKPSH. Residues 483 to 503 traverse the membrane as a helical segment; sequence LLPCSFVAIGILVAFFLLIQA. At 504-508 the chain is on the lumenal side; that stretch reads CPWTY. Residues 509–529 traverse the membrane as a helical segment; sequence YVYGLLPLPIWYAVLREFQVI. The Cytoplasmic portion of the chain corresponds to 530 to 543; it reads QDLVVSVLTYPLSH. Residues 544-564 form a helical membrane-spanning segment; that stretch reads FVGYLLAFTLGIEVLVLSFFY. A topological domain (lumenal) is located at residue Arg565. Residues 566–586 form a helical membrane-spanning segment; that stretch reads YMLTAGLTAFAAWPFLTRLWT. Residues 587–591 lie on the Cytoplasmic side of the membrane; sequence RAKMT. The helical transmembrane segment at 592-612 threads the bilayer; the sequence is SLSWTFFSLLLAVFPLMPVVG. Residues 613–618 lie on the Lumenal side of the membrane; it reads RKPDIS. Residues 619 to 639 traverse the membrane as a helical segment; that stretch reads LVMGAGLLVLLLSLCVVTSLM. Residues 640–649 are Cytoplasmic-facing; it reads KRKDSFIKEE. The chain crosses the membrane as a helical span at residues 650 to 670; that stretch reads LLVHLLQVLSTVLSMYVVYST. The Lumenal portion of the chain corresponds to 671–685; it reads QSSLLRKQGLPLMNQ. Residues 686 to 706 form a helical membrane-spanning segment; it reads IISWATLASSLVVPLLSSPVL. Topologically, residues 707–723 are cytoplasmic; sequence FQRLFSILLSLMSTYLL. A helical transmembrane segment spans residues 724 to 744; it reads LSTGYEALFPLVLSCLMFVWI. Residues 745–786 lie on the Lumenal side of the membrane; sequence NIEQETLQQSGVCCKQKLTSIQFSYNTDITQFRQLYLDDIRR. The helical transmembrane segment at 787–807 threads the bilayer; it reads AFFLVFFLVTAFFGTGNIASI. Residues 808–824 are Cytoplasmic-facing; sequence NSFDLASVYCFLTVFSP. Residues 825–845 traverse the membrane as a helical segment; that stretch reads FMMGALMMWKILIPFVLVMCA. Residues 846–858 lie on the Lumenal side of the membrane; the sequence is FEAVQLTTQLSSK. Residues 859–879 form a helical membrane-spanning segment; the sequence is SLFLIVLVISDIMALHFFFLV. Residues 880–894 lie on the Cytoplasmic side of the membrane; that stretch reads KDYGSWLDIGTSISH. The helical transmembrane segment at 895-915 threads the bilayer; sequence YVIVMSMTIFLVFLNGLAQLL. The Lumenal portion of the chain corresponds to 916-931; it reads TTKKLRLCGKPKSHFM.

Belongs to the PIGG/PIGN/PIGO family. PIGN subfamily.

It is found in the endoplasmic reticulum membrane. The protein operates within glycolipid biosynthesis; glycosylphosphatidylinositol-anchor biosynthesis. In terms of biological role, ethanolamine phosphate transferase that catalyzes an ethanolamine phosphate (EtNP) transfer from phosphatidylethanolamine (PE) to the 2-OH position of the first alpha-1,4-linked mannose of the alpha-D-Man-(1-&gt;6)-alpha-D-Man-(1-&gt;4)-alpha-D-GlcN-(1-&gt;6)-(1-radyl,2-acyl-sn-glycero-3-phospho)-2-acyl-inositol (also termed H3) intermediate to generate an alpha-D-Man-(1-&gt;6)-2-PEtn-alpha-D-Man-(1-&gt;4)-alpha-D-GlcN-(1-&gt;6)-(1-radyl,2-acyl-sn-glycero-3-phospho)-2-acyl-inositol and participates in the eighth step of the glycosylphosphatidylinositol-anchor biosynthesis. May act as suppressor of replication stress and chromosome missegregation. The polypeptide is GPI ethanolamine phosphate transferase 1 (Homo sapiens (Human)).